Consider the following 549-residue polypeptide: Alanine aminotransferase 2-like (549 aa).

Lysine 367 is subject to N6-(pyridoxal phosphate)lysine.

It belongs to the class-I pyridoxal-phosphate-dependent aminotransferase family. Alanine aminotransferase subfamily. As to quaternary structure, homodimer. The cofactor is pyridoxal 5'-phosphate.

It carries out the reaction L-alanine + 2-oxoglutarate = pyruvate + L-glutamate. It functions in the pathway amino-acid degradation; L-alanine degradation via transaminase pathway; pyruvate from L-alanine: step 1/1. Functionally, catalyzes the reversible transamination between alanine and 2-oxoglutarate to form pyruvate and glutamate. The chain is Alanine aminotransferase 2-like (gpt2l) from Danio rerio (Zebrafish).